The primary structure comprises 360 residues: sn-glycerol-3-phosphate import ATP-binding protein UgpC (360 aa).

One can recognise an ABC transporter domain in the interval 4–235 (LSLKGVRKSY…PATTFVASFI (232 aa)). 37–44 (GPSGCGKS) lines the ATP pocket.

This sequence belongs to the ABC transporter superfamily. sn-glycerol-3-phosphate importer (TC 3.A.1.1.3) family. The complex is composed of two ATP-binding proteins (UgpC), two transmembrane proteins (UgpA and UgpE) and a solute-binding protein (UgpB).

The protein resides in the cell inner membrane. The catalysed reaction is sn-glycerol 3-phosphate(out) + ATP + H2O = sn-glycerol 3-phosphate(in) + ADP + phosphate + H(+). In terms of biological role, part of the ABC transporter complex UgpBAEC involved in sn-glycerol-3-phosphate (G3P) import. Responsible for energy coupling to the transport system. The protein is sn-glycerol-3-phosphate import ATP-binding protein UgpC of Burkholderia pseudomallei (strain K96243).